Consider the following 369-residue polypeptide: S-(hydroxymethyl)glutathione dehydrogenase (369 aa).

The Zn(2+) site is built by cysteine 40, histidine 62, cysteine 92, cysteine 95, cysteine 98, cysteine 106, and cysteine 169.

It belongs to the zinc-containing alcohol dehydrogenase family. Class-III subfamily. Homodimer. It depends on Zn(2+) as a cofactor.

It is found in the cytoplasm. The enzyme catalyses S-(hydroxymethyl)glutathione + NADP(+) = S-formylglutathione + NADPH + H(+). It catalyses the reaction S-(hydroxymethyl)glutathione + NAD(+) = S-formylglutathione + NADH + H(+). It carries out the reaction a primary alcohol + NAD(+) = an aldehyde + NADH + H(+). The catalysed reaction is a secondary alcohol + NAD(+) = a ketone + NADH + H(+). The enzyme catalyses S-nitrosoglutathione + NADH + H(+) = S-(hydroxysulfenamide)glutathione + NAD(+). Has high formaldehyde dehydrogenase activity in the presence of glutathione and catalyzes the oxidation of normal alcohols in a reaction that is not GSH-dependent. In addition, hemithiolacetals other than those formed from GSH, including omega-thiol fatty acids, also are substrates. Also acts as a S-nitroso-glutathione reductase by catalyzing the NADH-dependent reduction of S-nitrosoglutathione. In Escherichia coli O6:H1 (strain CFT073 / ATCC 700928 / UPEC), this protein is S-(hydroxymethyl)glutathione dehydrogenase (frmA).